The following is a 444-amino-acid chain: Transcription factor PIF5 (444 aa).

Residues 26–39 (EDELVELLWRDGQV) are involved in interaction with phyB. Disordered stretches follow at residues 154–265 (HCGS…NLSE) and 416–444 (MLGFGSPAGPQSQLSAPATTDSLHMGKIG). Polar residues predominate over residues 155–171 (CGSNQSTNIHQATTLPV). A compositionally biased stretch (basic and acidic residues) spans 175–185 (DRSKNVEERLD). A compositionally biased stretch (low complexity) spans 187 to 197 (SSGGSSGCSYG). The span at 224–244 (ESVSQSDIGLTSTDDQTMGNK) shows a compositional bias: polar residues. Residues 256–265 (RAAEVHNLSE) are compositionally biased toward basic and acidic residues. In terms of domain architecture, bHLH spans 256-305 (RAAEVHNLSERRRRDRINERMKALQELIPHCSRTDKASILDEAIDYLKSL). The span at 424–437 (GPQSQLSAPATTDS) shows a compositional bias: polar residues. Serine 437 is modified (phosphoserine).

As to quaternary structure, homodimer. Interacts specifically with the Pfr form of phytochrome B and with TOC1/APRR1. May form a heterodimer with PIF3. Interacts with PHYB, CRY1 and CRY2 in the nucleus in response to low blue light (LBL). Interacts with TOPP4. Associates to PTAC12/HMR/PAP5 which acts as a transcriptional coactivator. In terms of processing, phosphorylated. Additional phosphorylations induced within 60 seconds following phytochrome B photoactivation. Post-translationally, dephosphorylated by TOPP4 during photomorphogenesis, leading to subsequent degradation of PIF5 by the proteasomal pathway. In terms of tissue distribution, mainly expressed in leaves and seedlings, and, to a lower extent, in stems, fruits, flowers and roots.

It localises to the nucleus. Its function is as follows. Transcription factor acting negatively in the phytochrome B signaling pathway to promote the shade-avoidance response. Regulates PHYB abundance at the post-transcriptional level, possibly via the ubiquitin-proteasome pathway. Promotes ethylene activity in the dark. May regulate the expression of a subset of genes by binding to the G-box motif. Might be involved in the integration of light-signals to control both circadian and photomorphogenic processes. Activated by CRY1 and CRY2 in response to low blue light (LBL) by direct binding at chromatin on E-box variant 5'-CA[CT]GTG-3' to stimulate specific gene expression to adapt global physiology (e.g. hypocotyl elongation in low blue light). The sequence is that of Transcription factor PIF5 from Arabidopsis thaliana (Mouse-ear cress).